The sequence spans 244 residues: Phosphoadenosine 5'-phosphosulfate reductase (244 aa).

The active-site Nucleophile; cysteine thiosulfonate intermediate is cysteine 239.

The protein belongs to the PAPS reductase family. CysH subfamily.

It localises to the cytoplasm. The catalysed reaction is [thioredoxin]-disulfide + sulfite + adenosine 3',5'-bisphosphate + 2 H(+) = [thioredoxin]-dithiol + 3'-phosphoadenylyl sulfate. Its pathway is sulfur metabolism; hydrogen sulfide biosynthesis; sulfite from sulfate: step 3/3. Catalyzes the formation of sulfite from phosphoadenosine 5'-phosphosulfate (PAPS) using thioredoxin as an electron donor. This Salmonella agona (strain SL483) protein is Phosphoadenosine 5'-phosphosulfate reductase.